The chain runs to 248 residues: NADH dehydrogenase [ubiquinone] flavoprotein 2, mitochondrial (248 aa).

Residues 1 to 31 (MFSLALRARASGLTAQWGRHARNLHKTAVQN) constitute a mitochondrion transit peptide. [2Fe-2S] cluster-binding residues include cysteine 134, cysteine 139, cysteine 175, and cysteine 179. The residue at position 192 (tyrosine 192) is a Phosphotyrosine; by SRC. The disordered stretch occupies residues 229-248 (GLTSLTEPPKGPGFGVQAGL).

This sequence belongs to the complex I 24 kDa subunit family. As to quaternary structure, core subunit of respiratory chain NADH dehydrogenase (Complex I) which is composed of 45 different subunits. This is a component of the flavoprotein-sulfur (FP) fragment of the enzyme. It depends on [2Fe-2S] cluster as a cofactor.

It localises to the mitochondrion inner membrane. It carries out the reaction a ubiquinone + NADH + 5 H(+)(in) = a ubiquinol + NAD(+) + 4 H(+)(out). Core subunit of the mitochondrial membrane respiratory chain NADH dehydrogenase (Complex I) which catalyzes electron transfer from NADH through the respiratory chain, using ubiquinone as an electron acceptor. Parts of the peripheral arm of the enzyme, where the electrons from NADH are accepted by flavin mononucleotide (FMN) and then passed along a chain of iron-sulfur clusters by electron tunnelling to the final acceptor ubiquinone. Contains one iron-sulfur cluster. The chain is NADH dehydrogenase [ubiquinone] flavoprotein 2, mitochondrial from Rattus norvegicus (Rat).